The following is a 140-amino-acid chain: Transcription antitermination protein NusB (140 aa).

The protein belongs to the NusB family.

Its function is as follows. Involved in transcription antitermination. Required for transcription of ribosomal RNA (rRNA) genes. Binds specifically to the boxA antiterminator sequence of the ribosomal RNA (rrn) operons. The sequence is that of Transcription antitermination protein NusB from Thermoanaerobacter pseudethanolicus (strain ATCC 33223 / 39E) (Clostridium thermohydrosulfuricum).